A 136-amino-acid chain; its full sequence is Large ribosomal subunit protein bL19 (136 aa).

Belongs to the bacterial ribosomal protein bL19 family.

This protein is located at the 30S-50S ribosomal subunit interface and may play a role in the structure and function of the aminoacyl-tRNA binding site. This chain is Large ribosomal subunit protein bL19, found in Xylella fastidiosa (strain 9a5c).